Consider the following 25-residue polypeptide: M-poneritoxin-Nc2a (25 aa).

This sequence belongs to the ponericin-L family. In terms of tissue distribution, expressed by the venom gland.

Its subcellular location is the secreted. It is found in the target cell membrane. Membrane-perturbating peptide with multiple activities. It is insecticidal, since it induces reversible paralysis in insects (L.cuprina) after 1 hour, but fails to kill them. It shows moderate antibacterial activity against some Gram-positive and Gram-negative bacteria. It is also antiparasitic, since it moderately inhibits the larval development of the major pathogenic nematode of ruminants (H.contortus, IC(50)=23.2 uM), but fails to reduce the motility of adult males of the other nematode B.malayi. It also shows moderate cytotoxic activity against HEK293 cells (EC(50)=48-57 uM) but does not induce hemolysis in human erythrocytes. It also causes a moderate increase in intracellular calcium concentration on neuronal and epithelial cell lines, which supports a non-specific membrane perturbation mechanism of action. The protein is M-poneritoxin-Nc2a of Neoponera commutata (Large hunting ant).